Reading from the N-terminus, the 527-residue chain is ATP synthase subunit alpha (527 aa).

169–176 (GDRQTGKT) lines the ATP pocket.

Belongs to the ATPase alpha/beta chains family. As to quaternary structure, F-type ATPases have 2 components, CF(1) - the catalytic core - and CF(0) - the membrane proton channel. CF(1) has five subunits: alpha(3), beta(3), gamma(1), delta(1), epsilon(1). CF(0) has three main subunits: a(1), b(2) and c(9-12). The alpha and beta chains form an alternating ring which encloses part of the gamma chain. CF(1) is attached to CF(0) by a central stalk formed by the gamma and epsilon chains, while a peripheral stalk is formed by the delta and b chains.

It is found in the cell membrane. The catalysed reaction is ATP + H2O + 4 H(+)(in) = ADP + phosphate + 5 H(+)(out). In terms of biological role, produces ATP from ADP in the presence of a proton gradient across the membrane. The alpha chain is a regulatory subunit. The chain is ATP synthase subunit alpha from Metamycoplasma arthritidis (strain 158L3-1) (Mycoplasma arthritidis).